The following is a 224-amino-acid chain: Phosphoribosyltransferase domain-containing protein 1 (224 aa).

Mg(2+) is bound by residues E140 and D141. GMP-binding positions include 140–148 (EDIINTGRT), K172, 193–194 (FV), and D200. D200 lines the Mg(2+) pocket.

The protein belongs to the purine/pyrimidine phosphoribosyltransferase family.

In Xenopus tropicalis (Western clawed frog), this protein is Phosphoribosyltransferase domain-containing protein 1 (prtfdc1).